Here is a 335-residue protein sequence, read N- to C-terminus: Serpentine receptor class gamma-11 (335 aa).

7 consecutive transmembrane segments (helical) span residues 33 to 53 (FLQIAYLIPGGILNILLLYTI), 66 to 86 (FFLIYSTDCFVSFSMIFLDII), 98 to 118 (PIIAPMFYEPLIGFKIMMIVL), 154 to 174 (LKYLIILVFVIPFSIDWNLII), 202 to 222 (FQLIFITIALLFTIVCTSVIF), 242 to 262 (GTAYISMSFIILVVFQFLFAF), and 271 to 291 (TIFGYSLLSYDILNVGSPIIM).

It belongs to the nematode receptor-like protein srg family.

The protein resides in the membrane. This Caenorhabditis elegans protein is Serpentine receptor class gamma-11 (srg-11).